Here is a 218-residue protein sequence, read N- to C-terminus: MSIGILGKKLGMSQFFDDQGRAIPVTLIEAGPCRITQLKTSDIDGYAAVQIGFGDTREKLINKPSKGHLTKSGEVLLKHLREYRVEGLEGLELGAAITVGSFEAGQKVDVSGDTMGRGFSGYQKRHGFSRGPMSHGSKNHREPGSTGAGTTPGRIYPGKRMAGRYGGKKRTTRGLTILKVDSNRNLLVVKGSVPGKPGALLNIRPAKRVGSKPAQGGK.

Residues 127–167 (GFSRGPMSHGSKNHREPGSTGAGTTPGRIYPGKRMAGRYGG) form a disordered region.

The protein belongs to the universal ribosomal protein uL3 family. In terms of assembly, part of the 50S ribosomal subunit. Forms a cluster with proteins L14 and L19.

One of the primary rRNA binding proteins, it binds directly near the 3'-end of the 23S rRNA, where it nucleates assembly of the 50S subunit. This Prochlorococcus marinus (strain MIT 9303) protein is Large ribosomal subunit protein uL3.